Consider the following 158-residue polypeptide: Large ribosomal subunit protein uL11 (158 aa).

It belongs to the universal ribosomal protein uL11 family. As to quaternary structure, part of the ribosomal stalk of the 50S ribosomal subunit. Interacts with L10 and the large rRNA to form the base of the stalk. L10 forms an elongated spine to which L12 dimers bind in a sequential fashion forming a multimeric L10(L12)X complex.

Its function is as follows. Forms part of the ribosomal stalk which helps the ribosome interact with GTP-bound translation factors. The protein is Large ribosomal subunit protein uL11 of Methanoregula boonei (strain DSM 21154 / JCM 14090 / 6A8).